A 185-amino-acid chain; its full sequence is Ribosome-recycling factor (185 aa).

It belongs to the RRF family.

It is found in the cytoplasm. In terms of biological role, responsible for the release of ribosomes from messenger RNA at the termination of protein biosynthesis. May increase the efficiency of translation by recycling ribosomes from one round of translation to another. This is Ribosome-recycling factor from Geobacillus sp. (strain WCH70).